Consider the following 283-residue polypeptide: Shikimate dehydrogenase (NADP(+)) (283 aa).

Residues 16 to 18 (SLS) and Thr-63 each bind shikimate. Catalysis depends on Lys-67, which acts as the Proton acceptor. NADP(+) is bound at residue Asp-79. Shikimate contacts are provided by Asn-88 and Asp-103. NADP(+) contacts are provided by residues 128–132 (GAGGA), Ala-223, and Gly-243.

Belongs to the shikimate dehydrogenase family. In terms of assembly, homodimer.

It carries out the reaction shikimate + NADP(+) = 3-dehydroshikimate + NADPH + H(+). It participates in metabolic intermediate biosynthesis; chorismate biosynthesis; chorismate from D-erythrose 4-phosphate and phosphoenolpyruvate: step 4/7. Involved in the biosynthesis of the chorismate, which leads to the biosynthesis of aromatic amino acids. Catalyzes the reversible NADPH linked reduction of 3-dehydroshikimate (DHSA) to yield shikimate (SA). The protein is Shikimate dehydrogenase (NADP(+)) of Xanthomonas oryzae pv. oryzae (strain MAFF 311018).